Here is a 120-residue protein sequence, read N- to C-terminus: MINLLRLVVYEKGIPLTYEEWDGGNALHVACGAGGSLKMVKFLVENNILTNIHKKSEKFGDTPLTLAISYDHHDIVDYFKQKFNITSVTLKDLDVIIDRVKANYRRYYNIKKYYENQSKK.

ANK repeat units lie at residues 22 to 52 (DGGN…LTNI) and 59 to 88 (FGDT…ITSV).

The sequence is that of Putative ankyrin repeat protein RBE_1215 from Rickettsia bellii (strain RML369-C).